Consider the following 3841-residue polypeptide: Transformation/transcription domain-associated protein (3841 aa).

Disordered regions lie at residues 491 to 516 and 2002 to 2027; these read TPTV…PPAT and QQPE…MKRG. Positions 498 to 515 are enriched in pro residues; that stretch reads ALPPPAPPTPVTPAPPPA. Positions 2025 to 2040 match the Bipartite nuclear localization signal motif; that stretch reads KRGMSVDSAQDVKRFR. One can recognise an FAT domain in the interval 2671–3239; sequence VLKYLGKTHN…YFPIRTLYLT (569 aa). The interval 3249-3271 is disordered; that stretch reads KSDSGQQQPSSAAAQTHSASDPG. Over residues 3251–3268 the composition is skewed to low complexity; that stretch reads DSGQQQPSSAAAQTHSAS. One can recognise a PI3K/PI4K catalytic domain in the interval 3482–3805; sequence MPRVEIVQKH…AVTAIMTRLH (324 aa). A G-loop region spans residues 3488 to 3494; the sequence is VQKHNTA. The catalytic loop stretch occupies residues 3669 to 3677; sequence HLNRLNPEM. Residues 3689-3714 are activation loop; the sequence is VSYFRFDINDATGDLDANRPVPFRLT. The FATC domain occupies 3809–3841; it reads QFEGGESKVNTLVAAANSLDNLCRMDPAWHPWL.

This sequence belongs to the PI3/PI4-kinase family. TRA1 subfamily.

The protein resides in the nucleus. In terms of biological role, adapter protein, which is found in various multiprotein chromatin complexes with histone acetyltransferase activity (HAT), which gives a specific tag for epigenetic transcription activation. May be required for the mitotic checkpoint and normal cell cycle progression. May play a role in the formation and maintenance of the auditory system. This Danio rerio (Zebrafish) protein is Transformation/transcription domain-associated protein.